Reading from the N-terminus, the 840-residue chain is MDDLLKVPEIVTNIASYLSTVDYLSFQQVNKRVYAIINGKNDSKYWSLKLTRMGLQQVHSNEEEEITLLDENDNQNSLRIFEIYKSFTAQNSKKIFVKFYRCYNSYARKLYNNNLANFFPTSYSNDPLKQTRILNFIKKYNFSNKNDIETFTRIETNFNILREIFINSVLKESELNYQSNNLAAVARFMKILLISNEESNAIEFFKSKADLPPSLTVLPSNDELFWAEQPREEDSGGSTVIFNSKNLDTFLNQLRDFLNEKIKLADILFKDEFPVILQFIESFIQDILLDILNNILLSYSEFLKENGKDSKANYECVPELYFTFIKKFDTELNDSVNAGANFRKVVRDLLNLYLEPFVVNYMNQTTRVFESLINSQLANYDTQVQDKQREQNAKIYNTLKDQTDASSASNNELPNDLSIITETSKTVPEADSKPSTIHQSVHSTDISNDKLDFLSSFTKIFKFSNNENQRLKQQLQLAYNLNLISNNLQNIKSLISLDLCYKILQETSEKTDQIYKFHTIESLLPLIKLRCQEIFKILITQLNKNHVKPAFEKAILLLQKYNPNEIEQIEIKFNSLSPANTQVEPLVQFTELINIGDIILQMISIFYKNELIPKKIIDKNKDFLNDVIQLKKNFETSIDDFVAEGLNIGINKLMDEISFVFKTLQLPDDYNPPPPSRNSPIRDIKPTKCAIRVVELLSNHCFLLTGATDKGTIDVYQQEIGERFFNEIVKHLKKCFISTEGAIWLICDLNYFYDFIANKLKQKNVVPYFVGLKSIGQLYIISGKDSKELGKLISDLGKFNGIFTQEEIYEFVQRRSDWVRVRKDVEKVMYGLGIRDCCIM.

Residues 1–48 (MDDLLKVPEIVTNIASYLSTVDYLSFQQVNKRVYAIINGKNDSKYWSL) form the F-box domain. S409 carries the phosphoserine modification.

In terms of assembly, interacts with SKP1.

The protein resides in the cytoplasm. The protein localises to the bud neck. Its subcellular location is the cell tip. Functionally, involved in recycling plasma membrane proteins internalized by endocytosis. Required for recycling of the v-SNARE SNC1. The protein is Recyclin-1 (RCY1) of Saccharomyces cerevisiae (strain ATCC 204508 / S288c) (Baker's yeast).